Here is a 118-residue protein sequence, read N- to C-terminus: UPF0231 protein PM0457 (118 aa).

This sequence belongs to the UPF0231 family.

In Pasteurella multocida (strain Pm70), this protein is UPF0231 protein PM0457.